The sequence spans 380 residues: DNA primase small subunit PriS (380 aa).

Active-site residues include aspartate 101, aspartate 103, and aspartate 282.

This sequence belongs to the eukaryotic-type primase small subunit family. As to quaternary structure, heterodimer of a small subunit (PriS) and a large subunit (PriL). It depends on Mg(2+) as a cofactor. The cofactor is Mn(2+).

Functionally, catalytic subunit of DNA primase, an RNA polymerase that catalyzes the synthesis of short RNA molecules used as primers for DNA polymerase during DNA replication. The small subunit contains the primase catalytic core and has DNA synthesis activity on its own. Binding to the large subunit stabilizes and modulates the activity, increasing the rate of DNA synthesis while decreasing the length of the DNA fragments, and conferring RNA synthesis capability. The DNA polymerase activity may enable DNA primase to also catalyze primer extension after primer synthesis. May also play a role in DNA repair. The chain is DNA primase small subunit PriS from Hyperthermus butylicus (strain DSM 5456 / JCM 9403 / PLM1-5).